A 434-amino-acid polypeptide reads, in one-letter code: APETALA2-like protein 2 (434 aa).

Residues 1 to 116 form a disordered region; the sequence is MLLDLNVESP…KTRRGPRSRS (116 aa). The span at 12 to 23 shows a compositional bias: low complexity; it reads RSGTSSSSVLNS. Residues 25-38 show a composition bias toward gly residues; the sequence is DAGGGGGGGGGGGL. A compositionally biased stretch (pro residues) spans 72–87; it reads LPPPPPAAPSPAPAWQ. A compositionally biased stretch (basic residues) spans 104–113; sequence VAKKTRRGPR. Residues 106–115 carry the Nuclear localization signal motif; that stretch reads KKTRRGPRSR. 2 DNA-binding regions (AP2/ERF) span residues 118 to 174 and 210 to 267; these read QYRG…INFN and KFRG…TNFE. Residues 291 to 295 carry the EAR motif; that stretch reads LDLRI.

The protein belongs to the AP2/ERF transcription factor family. AP2 subfamily. In terms of assembly, may form homodimer. Interacts with TPR2/ASP1. Highly expressed in developing panicles and in young seedlings. Present at low levels at all developmental stages.

The protein resides in the nucleus. Functionally, probable transcription factor. Involved in spikelet transition. Together with SNB, controls synergistically inflorescence architecture and floral meristem establishment via the regulation of spatio-temporal expression of B- and E-function floral organ identity genes in the lodicules and of spikelet meristem genes. Prevents lemma and palea elongation as well as grain growth. The chain is APETALA2-like protein 2 from Oryza sativa subsp. japonica (Rice).